We begin with the raw amino-acid sequence, 372 residues long: Heat-inducible transcription repressor HrcA (372 aa).

Belongs to the HrcA family.

Functionally, negative regulator of class I heat shock genes (grpE-dnaK-dnaJ and groELS operons). Prevents heat-shock induction of these operons. The chain is Heat-inducible transcription repressor HrcA from Chloroflexus aurantiacus (strain ATCC 29366 / DSM 635 / J-10-fl).